Consider the following 489-residue polypeptide: Cryptochrome DASH (489 aa).

Residues 6-140 (PTVLVWFRND…EAKGYWGSTL (135 aa)) form the Photolyase/cryptochrome alpha/beta domain.

It belongs to the DNA photolyase class-1 family. Requires FAD as cofactor. It depends on (6R)-5,10-methylene-5,6,7,8-tetrahydrofolate as a cofactor.

Functionally, may have a photoreceptor function. Binds DNA; represses transcription of at least 8 genes, including slr0364 and slr1866. Does not encode a DNA photolyase function. Its disruption does not affect circadian rhythm. This is Cryptochrome DASH (cry) from Synechocystis sp. (strain ATCC 27184 / PCC 6803 / Kazusa).